Here is a 144-residue protein sequence, read N- to C-terminus: UPF0102 protein BURPS668_3819 (144 aa).

A disordered region spans residues 1–28 (MCHAREASLGTGEPEAAPRDNFPREAGS). Over residues 16-28 (AAPRDNFPREAGS) the composition is skewed to basic and acidic residues.

Belongs to the UPF0102 family.

In Burkholderia pseudomallei (strain 668), this protein is UPF0102 protein BURPS668_3819.